The chain runs to 103 residues: MVRYRMRSLSERPHEVHGQQVYGQEQGHNGQEEQGLSPEHVEVYERTHQGYSHHRRRRCSRRRLYRIHRRRHRSCRRRRRRSCRHRRRHRRGCRTRRRRCRRY.

The tract at residues 1 to 103 (MVRYRMRSLS…RTRRRRCRRY (103 aa)) is disordered. 2 positions are modified to phosphoserine: Ser-8 and Ser-10. Over residues 8–17 (SLSERPHEVH) the composition is skewed to basic and acidic residues. Positions 23-35 (GQEQGHNGQEEQG) are enriched in low complexity. Residue Ser-37 is modified to Phosphoserine. Residues 39 to 48 (EHVEVYERTH) are compositionally biased toward basic and acidic residues. A compositionally biased stretch (basic residues) spans 51–103 (YSHHRRRRCSRRRLYRIHRRRHRSCRRRRRRSCRHRRRHRRGCRTRRRRCRRY).

The protein belongs to the protamine P2 family. In terms of assembly, interacts with TDRP. Post-translationally, proteolytic processing into mature chains is required for histone eviction during spermatogenesis. Transition proteins (TNP1 and TNP2) are required for processing. Testis.

The protein resides in the nucleus. Its subcellular location is the chromosome. Protamines substitute for histones in the chromatin of sperm during the haploid phase of spermatogenesis. They compact sperm DNA into a highly condensed, stable and inactive complex. In Semnopithecus entellus (Northern plains gray langur), this protein is Protamine-2 (PRM2).